The sequence spans 626 residues: DNA-directed RNA polymerase subunit beta C-terminal section (626 aa).

Residues 287–307 (NTKSKNTGKGSKPPRASKAQN) are disordered.

Belongs to the RNA polymerase beta chain family. As to quaternary structure, in plastids the minimal PEP RNA polymerase catalytic core is composed of four subunits: alpha, beta, beta', and beta''. When a (nuclear-encoded) sigma factor is associated with the core the holoenzyme is formed, which can initiate transcription.

The protein localises to the plastid. Its subcellular location is the chloroplast. The catalysed reaction is RNA(n) + a ribonucleoside 5'-triphosphate = RNA(n+1) + diphosphate. Its function is as follows. DNA-dependent RNA polymerase catalyzes the transcription of DNA into RNA using the four ribonucleoside triphosphates as substrates. This Chlamydomonas reinhardtii (Chlamydomonas smithii) protein is DNA-directed RNA polymerase subunit beta C-terminal section (rpoB2).